The chain runs to 361 residues: Epi-isozizaene synthase (361 aa).

Asp-99, Asp-103, Asn-240, Ser-244, and Glu-248 together coordinate Mg(2+). The DDXXD motif motif lies at 99–103 (DDRHD).

Belongs to the terpene synthase family. Mg(2+) serves as cofactor. It depends on Mn(2+) as a cofactor. The cofactor is Fe(3+).

The enzyme catalyses (2E,6E)-farnesyl diphosphate = (+)-epi-isozizaene + diphosphate. Its pathway is sesquiterpene biosynthesis; epi-isozizaene biosynthesis. Its function is as follows. Catalyzes the cyclization of farnesyl diphosphate (FPP) to the sesquiterpene epi-isozizaene. The protein is Epi-isozizaene synthase (cyc1) of Streptomyces coelicolor (strain ATCC BAA-471 / A3(2) / M145).